We begin with the raw amino-acid sequence, 155 residues long: Large ribosomal subunit protein bL17 (155 aa).

Belongs to the bacterial ribosomal protein bL17 family. Part of the 50S ribosomal subunit. Contacts protein L32.

This is Large ribosomal subunit protein bL17 from Syntrophotalea carbinolica (strain DSM 2380 / NBRC 103641 / GraBd1) (Pelobacter carbinolicus).